The chain runs to 283 residues: 4-diphosphocytidyl-2-C-methyl-D-erythritol kinase (283 aa).

Lys-10 is a catalytic residue. 99–109 contacts ATP; the sequence is PMGGGLGGGSS. Residue Asp-141 is part of the active site.

It belongs to the GHMP kinase family. IspE subfamily. Homodimer.

The enzyme catalyses 4-CDP-2-C-methyl-D-erythritol + ATP = 4-CDP-2-C-methyl-D-erythritol 2-phosphate + ADP + H(+). The protein operates within isoprenoid biosynthesis; isopentenyl diphosphate biosynthesis via DXP pathway; isopentenyl diphosphate from 1-deoxy-D-xylulose 5-phosphate: step 3/6. Its function is as follows. Catalyzes the phosphorylation of the position 2 hydroxy group of 4-diphosphocytidyl-2C-methyl-D-erythritol. This is 4-diphosphocytidyl-2-C-methyl-D-erythritol kinase from Salmonella gallinarum (strain 287/91 / NCTC 13346).